The sequence spans 118 residues: Small ribosomal subunit protein uS13 (118 aa).

The disordered stretch occupies residues 94–118 (SLPLRGQRTKTNARTRKGPRKPIRK).

It belongs to the universal ribosomal protein uS13 family. As to quaternary structure, part of the 30S ribosomal subunit. Forms a loose heterodimer with protein S19. Forms two bridges to the 50S subunit in the 70S ribosome.

Functionally, located at the top of the head of the 30S subunit, it contacts several helices of the 16S rRNA. In the 70S ribosome it contacts the 23S rRNA (bridge B1a) and protein L5 of the 50S subunit (bridge B1b), connecting the 2 subunits; these bridges are implicated in subunit movement. Contacts the tRNAs in the A and P-sites. This chain is Small ribosomal subunit protein uS13, found in Shewanella baltica (strain OS223).